Consider the following 187-residue polypeptide: Putative gamma-glutamylcyclotransferase At3g02910 (187 aa).

17–20 (YGTL) is a substrate binding site. The active-site Proton acceptor is the E92.

Belongs to the gamma-glutamylcyclotransferase family.

Its function is as follows. Putative gamma-glutamylcyclotransferase. In Arabidopsis thaliana (Mouse-ear cress), this protein is Putative gamma-glutamylcyclotransferase At3g02910.